The following is a 119-amino-acid chain: Cysteine-rich DPF motif domain-containing protein 1 (119 aa).

Belongs to the CDPF1 family.

The protein is Cysteine-rich DPF motif domain-containing protein 1 (Cdpf1) of Mus musculus (Mouse).